The primary structure comprises 416 residues: E3 ubiquitin-protein ligase DMA1 (416 aa).

Positions 1 to 30 are disordered; sequence MSTNTVPSSPPNQTPPAASGIATSHDHTKF. Residues Lys-150, Lys-204, Lys-217, Lys-237, Lys-240, Lys-260, Lys-300, Lys-306, Lys-313, and Lys-317 each participate in a glycyl lysine isopeptide (Lys-Gly) (interchain with G-Cter in ubiquitin) cross-link. In terms of domain architecture, FHA spans 189 to 252; it reads IIIGRYTERV…SGTFLNHQRL (64 aa). The RING-type zinc-finger motif lies at 327-371; the sequence is CSICLNKIKPCQAIFISPCAHSWHFHCVRRLVIMNYPQFMCPNCR.

Belongs to the DMA1 family. In terms of assembly, interacts with CDC123. Interacts with PCL1. UBC4-dependent autoubiquitination occurs at Lys-150, Lys-204, Lys-217, Lys-237, Lys-240, Lys-260, Lys-300, Lys-306, Lys-313 and Lys-317. UBC4-dependent autoubiquitination is responsible for DMA2 turnover. UBC13/MMS2-dependent autoubiquitination occurs at Lys-237 and Lys-306. Lys-204 and Lys-306 are also ubiquitinated in trans by DMA2 E3 ligase in association with UBC4.

It is found in the cytoplasm. It catalyses the reaction S-ubiquitinyl-[E2 ubiquitin-conjugating enzyme]-L-cysteine + [acceptor protein]-L-lysine = [E2 ubiquitin-conjugating enzyme]-L-cysteine + N(6)-ubiquitinyl-[acceptor protein]-L-lysine.. Functionally, E3 ubiquitin-protein ligase which functions in cell cycle retarding in conjunction with the UBC4 and UBC13/MMS2 complex, 2 E2 ubiquitin conjugating enzymes. Involved in nutritional control of the cell cycle. Targets the G1 cyclin PCL1 for destruction. Required for proper spindle positioning, likely regulating septin ring deposition at the bud neck. The chain is E3 ubiquitin-protein ligase DMA1 from Saccharomyces cerevisiae (strain ATCC 204508 / S288c) (Baker's yeast).